A 670-amino-acid chain; its full sequence is Solute carrier organic anion transporter family member 1A1 (670 aa).

Residues 1–20 are Cytoplasmic-facing; it reads MEETEKKVATQEGRFFSKMK. Residues 21-40 traverse the membrane as a helical segment; the sequence is VFLMSLTCAYLAKSLSGVYM. The Extracellular segment spans residues 41 to 59; sequence NSMLTQIERQFGIPTSVVG. The helical transmembrane segment at 60 to 80 threads the bilayer; sequence FITGSFEIGNLLLIVFVSYFG. Topologically, residues 81 to 86 are cytoplasmic; it reads RKLHRP. A helical transmembrane segment spans residues 87-111; the sequence is IIIGVGCVVMGLGCFLMASPHFLMG. Residues 112–155 are Extracellular-facing; it reads RYKYETTISPTSNLSSNSFLCIENRTQTLKPTQDPTECVKEIKS. Residues Asn-124 and Asn-135 are each glycosylated (N-linked (GlcNAc...) asparagine). The helical transmembrane segment at 156-184 threads the bilayer; it reads LMWIYVLIGNTMRGIGETPIMPLGISYIE. The Cytoplasmic portion of the chain corresponds to 185–203; that stretch reads DFAKSENSPLYIGILEMGK. Residues 204-224 form a helical membrane-spanning segment; sequence IVGPIIGLLLGSFFARVYVDI. At 225–242 the chain is on the extracellular side; that stretch reads GSVNTDDLTITPTDTRWV. Residues 243 to 267 form a helical membrane-spanning segment; it reads GAWWIGFLVCAGVNILTSIPFFFFP. Residues 268-311 are Cytoplasmic-facing; sequence KTLPKKELQDNVDVTKYEKVEKHRERAKKENLGITKDFLPFMKS. Residues 312–333 form a helical membrane-spanning segment; it reads LCCNPIYMLFSLTSVLQINGFA. Over 334–353 the chain is Extracellular; it reads STFTFLPKYLEQQYGKSTSE. The helical transmembrane segment at 354–377 threads the bilayer; the sequence is AVFLIGVYSLPPVCLGYLISGFIM. Residues 378–381 are Cytoplasmic-facing; that stretch reads KKFK. Residues 382 to 405 traverse the membrane as a helical segment; the sequence is ITVKKAAYIAFGLSLSEYFIFLCN. At 406-513 the chain is on the extracellular side; it reads YLLTCDNFPV…PECDNKLQYF (108 aa). The Kazal-like domain occupies 433 to 488; that stretch reads KNVLADCNTRCSCLTDTWDPVCGDNGLAYMSACLAGCEKSVGTGTNMVFQNCSCIG. 3 disulfides stabilise this stretch: Cys-439–Cys-469, Cys-445–Cys-465, and Cys-454–Cys-486. 2 N-linked (GlcNAc...) asparagine glycosylation sites follow: Asn-483 and Asn-492. A helical transmembrane segment spans residues 514–536; it reads LIKSVFSSFIFSLAAIPGYMVLL. At 537–545 the chain is on the cytoplasmic side; it reads RCVKSEEKS. A helical membrane pass occupies residues 546–571; the sequence is IGVGLHAFFIRLLAGIPAPVYFGALI. At 572–605 the chain is on the extracellular side; the sequence is DRTCLHWGTLKCGQPGACRMYDINRFRHIYLGLP. Residues 606-623 traverse the membrane as a helical segment; that stretch reads AAVRGSSFLPAVFILILM. Over 624–670 the chain is Cytoplasmic; it reads RKFHFPGDIHSPDTELAEMKLTEKESECTDVCRSPKVENDGELKTKL. Residue Ser-634 is modified to Phosphoserine.

It belongs to the organo anion transporter (TC 2.A.60) family. Binds to PDZK1. Interaction with PDZK1 is required for expression on hepatocyte surface. Highly expressed in liver, and at lower levels in kidney. Not detected in other tissues.

The protein localises to the basolateral cell membrane. The enzyme catalyses estrone 3-sulfate(out) + hydrogencarbonate(in) = estrone 3-sulfate(in) + hydrogencarbonate(out). The catalysed reaction is taurocholate(out) + hydrogencarbonate(in) = taurocholate(in) + hydrogencarbonate(out). It carries out the reaction L-thyroxine(out) = L-thyroxine(in). It catalyses the reaction prostaglandin E2(out) = prostaglandin E2(in). The enzyme catalyses 17beta-estradiol 17-O-(beta-D-glucuronate)(out) = 17beta-estradiol 17-O-(beta-D-glucuronate)(in). The catalysed reaction is dehydroepiandrosterone 3-sulfate(out) = dehydroepiandrosterone 3-sulfate(in). In terms of biological role, mediates the Na(+)-independent transport of organic anions such as steroid sulfate conjugates (dehydroepiandrosterone sulfate (DHEAS), 17-beta-glucuronosyl estradiol, estrone-3-sulfate), conjugated (taurocholate) and unconjugated (cholate) bile acids, prostaglandin E2 (PGE2) and L-thyroxine T4. Also capable of transporting sulfobromophthalein (BSP), ouabain and gadoxetate. Hydrogencarbonate/HCO3(-) acts as the probable counteranion that exchanges for organic anions. Shows a pH-sensitive substrate specificity which may be ascribed to the protonation state of the binding site and leads to a stimulation of substrate transport in an acidic microenvironment. This is Solute carrier organic anion transporter family member 1A1 from Mus musculus (Mouse).